A 458-amino-acid chain; its full sequence is Probable alpha-L-glutamate ligase (458 aa).

The tract at residues 1 to 162 (MSDNKFIIGS…YGVKTAKKSG (162 aa)) is unknown. Residues 163–458 (LKIGLLASNP…IEKKLGWKAD (296 aa)) are alpha-L-glutamate ligase. In terms of domain architecture, ATP-grasp spans 267 to 450 (LQLLQKNNLD…IAGAMIESIE (184 aa)). ATP is bound by residues Lys-304, 341 to 342 (EF), Asp-350, and 374 to 376 (RAN). Mg(2+)-binding residues include Asp-411, Glu-423, and Asn-425. 3 residues coordinate Mn(2+): Asp-411, Glu-423, and Asn-425.

This sequence in the C-terminal section; belongs to the RimK family. Requires Mg(2+) as cofactor. Mn(2+) is required as a cofactor.

The sequence is that of Probable alpha-L-glutamate ligase from Shewanella pealeana (strain ATCC 700345 / ANG-SQ1).